Here is a 189-residue protein sequence, read N- to C-terminus: Interferon alpha-1/13 (189 aa).

Residues 1–23 (MASPFALLMVLVVLSCKSSCSLG) form the signal peptide. Disulfide bonds link Cys24/Cys122 and Cys52/Cys162.

The protein belongs to the alpha/beta interferon family. As to quaternary structure, interacts with CR2.

The protein localises to the secreted. In terms of biological role, produced by macrophages, IFN-alpha have antiviral activities. Interferon stimulates the production of two enzymes: a protein kinase and an oligoadenylate synthetase. This Homo sapiens (Human) protein is Interferon alpha-1/13 (IFNA1).